The chain runs to 394 residues: Chalcone synthase 2 (394 aa).

C167 is a catalytic residue.

The protein belongs to the thiolase-like superfamily. Chalcone/stilbene synthases family.

The enzyme catalyses (E)-4-coumaroyl-CoA + 3 malonyl-CoA + 3 H(+) = 2',4,4',6'-tetrahydroxychalcone + 3 CO2 + 4 CoA. It functions in the pathway secondary metabolite biosynthesis; flavonoid biosynthesis. Its function is as follows. The primary product of this enzyme is 4,2',4',6'-tetrahydroxychalcone (also termed naringenin-chalcone or chalcone) which can under specific conditions spontaneously isomerize into naringenin. This chain is Chalcone synthase 2 (CHS2), found in Secale cereale (Rye).